Reading from the N-terminus, the 368-residue chain is Phospho-N-acetylmuramoyl-pentapeptide-transferase (368 aa).

A run of 9 helical transmembrane segments spans residues 30-50 (AAAITALLISLMAGPWFIRYL), 72-92 (LPTMGGILIIFSIEVSVFLWA), 98-118 (HVWLVMLAIFWMGLIGFIDDY), 139-159 (ISLGLVIGLYTWFDPAFAVLL), 170-190 (LSIDYGIFYIPIVIFIITAVS), 201-221 (GLASGTTAIVVSALGAFSYLA), 238-258 (GGEIAVVCMAIVMACVGFLWF), 264-286 (EIIMGDTGSLALGSAVAVIALLI), and 345-365 (KIVIRFWIISILFFLTSLMTL).

This sequence belongs to the glycosyltransferase 4 family. MraY subfamily. It depends on Mg(2+) as a cofactor.

The protein localises to the cell inner membrane. It carries out the reaction UDP-N-acetyl-alpha-D-muramoyl-L-alanyl-gamma-D-glutamyl-meso-2,6-diaminopimeloyl-D-alanyl-D-alanine + di-trans,octa-cis-undecaprenyl phosphate = di-trans,octa-cis-undecaprenyl diphospho-N-acetyl-alpha-D-muramoyl-L-alanyl-D-glutamyl-meso-2,6-diaminopimeloyl-D-alanyl-D-alanine + UMP. It functions in the pathway cell wall biogenesis; peptidoglycan biosynthesis. Catalyzes the initial step of the lipid cycle reactions in the biosynthesis of the cell wall peptidoglycan: transfers peptidoglycan precursor phospho-MurNAc-pentapeptide from UDP-MurNAc-pentapeptide onto the lipid carrier undecaprenyl phosphate, yielding undecaprenyl-pyrophosphoryl-MurNAc-pentapeptide, known as lipid I. In Chlorobium phaeobacteroides (strain DSM 266 / SMG 266 / 2430), this protein is Phospho-N-acetylmuramoyl-pentapeptide-transferase.